The sequence spans 275 residues: Elongation factor Ts (275 aa).

Residues 76 to 79 are involved in Mg(2+) ion dislocation from EF-Tu; that stretch reads TDFV.

This sequence belongs to the EF-Ts family.

Its subcellular location is the cytoplasm. In terms of biological role, associates with the EF-Tu.GDP complex and induces the exchange of GDP to GTP. It remains bound to the aminoacyl-tRNA.EF-Tu.GTP complex up to the GTP hydrolysis stage on the ribosome. The protein is Elongation factor Ts of Corynebacterium kroppenstedtii (strain DSM 44385 / JCM 11950 / CIP 105744 / CCUG 35717).